The sequence spans 248 residues: Kallikrein-12 (248 aa).

The signal sequence occupies residues 1–17; that stretch reads MGLSIFLLLCVLGLSQA. One can recognise a Peptidase S1 domain in the interval 22–246; the sequence is IFNGTECGRN…YVDWIRMIMR (225 aa). Asn-24 is a glycosylation site (N-linked (GlcNAc...) asparagine). 6 cysteine pairs are disulfide-bonded: Cys-28/Cys-161, Cys-47/Cys-63, Cys-133/Cys-235, Cys-140/Cys-206, Cys-172/Cys-186, and Cys-196/Cys-222. Active-site charge relay system residues include His-62 and Asp-108. Asn-163 carries N-linked (GlcNAc...) asparagine glycosylation. The active-site Charge relay system is the Ser-200.

This sequence belongs to the peptidase S1 family. Kallikrein subfamily.

It is found in the secreted. The chain is Kallikrein-12 (KLK12) from Homo sapiens (Human).